Consider the following 364-residue polypeptide: DNA replication and repair protein RecF (364 aa).

Position 30–37 (30–37 (GDNGAGKT)) interacts with ATP.

The protein belongs to the RecF family.

Its subcellular location is the cytoplasm. The RecF protein is involved in DNA metabolism; it is required for DNA replication and normal SOS inducibility. RecF binds preferentially to single-stranded, linear DNA. It also seems to bind ATP. This is DNA replication and repair protein RecF from Stenotrophomonas maltophilia (strain R551-3).